The sequence spans 268 residues: Hydroxyethylthiazole kinase (268 aa).

M46 serves as a coordination point for substrate. 2 residues coordinate ATP: R122 and T168. G195 is a binding site for substrate.

Belongs to the Thz kinase family. The cofactor is Mg(2+).

It catalyses the reaction 5-(2-hydroxyethyl)-4-methylthiazole + ATP = 4-methyl-5-(2-phosphooxyethyl)-thiazole + ADP + H(+). It functions in the pathway cofactor biosynthesis; thiamine diphosphate biosynthesis; 4-methyl-5-(2-phosphoethyl)-thiazole from 5-(2-hydroxyethyl)-4-methylthiazole: step 1/1. Catalyzes the phosphorylation of the hydroxyl group of 4-methyl-5-beta-hydroxyethylthiazole (THZ). The polypeptide is Hydroxyethylthiazole kinase (Desulfatibacillum aliphaticivorans).